The following is a 265-amino-acid chain: Type 1 encapsulin shell protein (265 aa).

FMN is bound by residues 79–81 (RAT), Trp87, and 90–94 (DNLER). The pore-forming loop stretch occupies residues 184 to 189 (EAGHYP). Residue Glu235 coordinates FMN.

This sequence belongs to the encapsulin family. Family 1 subfamily. As to quaternary structure, homomultimeric. This encapsulin nanocompartment is formed by 60 subunits; monomers form 12 pentamers which assemble to form shells. There are 12 pores where the pentamers meet as well as 3-fold axis channels and dimer channels; none are larger than 3-4 Angstroms in diameter. The N-terminus of the protein is inside the shell, the C-terminus is outside. Probably 3, 4 or 5 Flp cargo decamers bind inside the encapulin nanocompartment. FMN serves as cofactor.

The protein localises to the encapsulin nanocompartment. Proteolysis activated by calcium and cobalt. Shell component of a type 1 encapsulin nanocompartment. Assembles into proteinaceous shells 23-24 nm in diameter with 2-2.5 nm thick walls. Cargo protein Flp (ferritin-like protein, probably stores iron) is targeted to the interior via its C-terminal extension; empty intact shells can be isolated in the absence of cargo protein. Fe(2+) may be able to pass though the 5-fold and dimer channels in the protein shell. Functionally, protease that exhibits activity toward chymotrypsin and trypsin substrates. Probably does not have antibacterial activity. This is Type 1 encapsulin shell protein from Thermotoga maritima (strain ATCC 43589 / DSM 3109 / JCM 10099 / NBRC 100826 / MSB8).